The following is a 362-amino-acid chain: Porin Omp2b (362 aa).

The signal sequence occupies residues 1-22 (MNIKSLLLGSAAALVAASGAQA).

The protein belongs to the alphaproteobacteria porin family. As to quaternary structure, homotrimer.

It is found in the cell outer membrane. Its function is as follows. Forms passive diffusion pores that allow small molecular weight hydrophilic materials across the outer membrane. The chain is Porin Omp2b (omp2b) from Brucella neotomae.